Here is a 383-residue protein sequence, read N- to C-terminus: Probable tRNA sulfurtransferase (383 aa).

The THUMP domain maps to 58 to 158 (NEIIHILKMI…ENKSYVWFDK (101 aa)). ATP contacts are provided by residues 176-177 (LL), 201-202 (TF), Arg-259, Gly-281, and Gln-290.

It belongs to the ThiI family.

Its subcellular location is the cytoplasm. The catalysed reaction is [ThiI sulfur-carrier protein]-S-sulfanyl-L-cysteine + a uridine in tRNA + 2 reduced [2Fe-2S]-[ferredoxin] + ATP + H(+) = [ThiI sulfur-carrier protein]-L-cysteine + a 4-thiouridine in tRNA + 2 oxidized [2Fe-2S]-[ferredoxin] + AMP + diphosphate. The enzyme catalyses [ThiS sulfur-carrier protein]-C-terminal Gly-Gly-AMP + S-sulfanyl-L-cysteinyl-[cysteine desulfurase] + AH2 = [ThiS sulfur-carrier protein]-C-terminal-Gly-aminoethanethioate + L-cysteinyl-[cysteine desulfurase] + A + AMP + 2 H(+). It participates in cofactor biosynthesis; thiamine diphosphate biosynthesis. In terms of biological role, catalyzes the ATP-dependent transfer of a sulfur to tRNA to produce 4-thiouridine in position 8 of tRNAs, which functions as a near-UV photosensor. Also catalyzes the transfer of sulfur to the sulfur carrier protein ThiS, forming ThiS-thiocarboxylate. This is a step in the synthesis of thiazole, in the thiamine biosynthesis pathway. The sulfur is donated as persulfide by IscS. The polypeptide is Probable tRNA sulfurtransferase (Malacoplasma penetrans (strain HF-2) (Mycoplasma penetrans)).